The primary structure comprises 258 residues: Regulatory protein RecX (258 aa).

The protein belongs to the RecX family.

The protein localises to the cytoplasm. In terms of biological role, modulates RecA activity. This is Regulatory protein RecX from Streptococcus pneumoniae (strain JJA).